The sequence spans 119 residues: Large ribosomal subunit protein uL18 (119 aa).

This sequence belongs to the universal ribosomal protein uL18 family. Part of the 50S ribosomal subunit; part of the 5S rRNA/L5/L18/L25 subcomplex. Contacts the 5S and 23S rRNAs.

Its function is as follows. This is one of the proteins that bind and probably mediate the attachment of the 5S RNA into the large ribosomal subunit, where it forms part of the central protuberance. The sequence is that of Large ribosomal subunit protein uL18 from Jannaschia sp. (strain CCS1).